Consider the following 350-residue polypeptide: Salicylate decarboxylase (350 aa).

It belongs to the metallo-dependent hydrolases superfamily. Homotetramer.

It carries out the reaction salicylate + H(+) = phenol + CO2. Inhibited by AgNO(3), HgCl(2), p-chloromercuribenzoic acid and NiCl(2). Reversibly catalyzes the regioselective carboxylation of phenol to form salicylic acid. Involved in a pathway for the degradation of salicylate via phenol. Also catalyzes the decarboxylation of beta-resorcylic acid (2,4-dihydroxybenzoic acid) into resorcinol (1,3-dihydroxybenzene), gamma-resorcylic acid (2,6-dihydroxybenzoic acid) into resorcinol, 2,3-dihydroxybenzoic acid into catechol (1,2-dihydroxybenzene), and 4-aminosalicylic acid into 3-aminophenol. The chain is Salicylate decarboxylase from Cutaneotrichosporon moniliiforme (Yeast).